The following is a 288-amino-acid chain: MKVDINAIKELRDLTGAGVGDCKDALTSCNGDIEKAKTYLREQGIAKAYKKSNKDVSDGLVAICIDGNKGAILEVNSETDFVARNEKFQKLVLNLAFLANQYGIENIEDFLKCEYANNTNINDEIMSNIAVIGENIHLNKIGCLSVSSGVVCGYIHNPIVDNLGKVGAIVALESNCDVEKLKIFARQIAMHIVATKPEALSLDVLDQNVIDKERDIIKKQVEQLNKPASVLEKIIDGRMAKFYQEVVLMNQMFIMDSQFTVSELIKKKEEELGSSINIVDYKLFIINK.

Residues 79–82 (TDFV) form an involved in Mg(2+) ion dislocation from EF-Tu region.

Belongs to the EF-Ts family.

The protein resides in the cytoplasm. Its function is as follows. Associates with the EF-Tu.GDP complex and induces the exchange of GDP to GTP. It remains bound to the aminoacyl-tRNA.EF-Tu.GTP complex up to the GTP hydrolysis stage on the ribosome. The chain is Elongation factor Ts from Ehrlichia ruminantium (strain Welgevonden).